Consider the following 430-residue polypeptide: Probable glucose-6-phosphate isomerase (430 aa).

Glu271 serves as the catalytic Proton donor. Catalysis depends on residues His292, His303, and Lys403.

The protein belongs to the GPI family.

Its subcellular location is the cytoplasm. The catalysed reaction is alpha-D-glucose 6-phosphate = beta-D-fructose 6-phosphate. Its pathway is carbohydrate biosynthesis; gluconeogenesis. The protein operates within carbohydrate degradation; glycolysis; D-glyceraldehyde 3-phosphate and glycerone phosphate from D-glucose: step 2/4. Catalyzes the reversible isomerization of glucose-6-phosphate to fructose-6-phosphate. The sequence is that of Probable glucose-6-phosphate isomerase from Haloquadratum walsbyi (strain DSM 16790 / HBSQ001).